A 724-amino-acid chain; its full sequence is Disks large homolog 4 (724 aa).

2 S-palmitoyl cysteine lipidation sites follow: cysteine 3 and cysteine 5. The tract at residues 15-35 is disordered; it reads QDEDTPPLEHSPAHLPNQANS. 2 consecutive PDZ domains span residues 65–151 and 160–246; these read EITL…VMRR and EIKL…VAKP. Serine 73 and serine 142 each carry phosphoserine. At tyrosine 240 the chain carries Phosphotyrosine. At serine 295 the chain carries Phosphoserine. The PDZ 3 domain maps to 313-393; that stretch reads RIVIHRGSTG…QTVTIIAQYK (81 aa). Phosphoserine is present on residues serine 415 and serine 418. Threonine 420 bears the Phosphothreonine mark. 4 positions are modified to phosphoserine: serine 422, serine 425, serine 449, and serine 480. One can recognise an SH3 domain in the interval 428-498; that stretch reads KRGFYIRALF…PSKRRVERRE (71 aa). Positions 534 to 709 constitute a Guanylate kinase-like domain; sequence ARPIIILGPT…IYHKVKRVIE (176 aa). A Phosphotyrosine modification is found at tyrosine 580. Phosphoserine is present on residues serine 606 and serine 654. A Phosphotyrosine modification is found at tyrosine 715.

The protein belongs to the MAGUK family. Interacts through its PDZ domains with ANO2 and NETO1. Interacts with KCNJ4. Interacts through its first two PDZ domains with GRIN2A, GRIN2B, GRIN2C and GRIN2D. Interacts with ERBB4. Interacts with KCNA1, KCNA2, KCNA3 and KCNA4. Interacts with LRRC4 and LRRC4B. Interacts with SYNGAP1. Interacts with ASIC3. Interacts with SEMA4C. Interacts with CXADR. Interacts with KCND2. Interacts (via first PDZ domain) with CRIPT. Interacts through its first PDZ domain with GRIK2 and KCNA4. Interacts through its second PDZ domain with the PDZ domain of NOS1 or the C-terminus of CAPON. Interacts through its third PDZ domain with NLGN1 and CRIPT, and probably with NLGN2 and NLGN3. Interacts through its guanylate kinase-like domain with DLGAP1/GKAP, DLGAP2, DLGAP3, DLGAP4, MAP1A, BEGAIN and SIPA1L1. Interacts through its guanylate kinase-like domain with KIF13B. Isoform 2 interacts through an L27 domain with HGS/HRS and the first L27 domain of CASK. Interacts with ANKS1B. Interacts with ADR1B. May interact with HTR2A. Interacts with ADAM22, KLHL17 and LGI1. Interacts with FRMPD4 (via C-terminus). Interacts with LRFN1 and LRFN2. Interacts with LRFN4. Interacts (via N-terminal tandem pair of PDZ domains) with GPER1 (via C-terminus tail motif); the interaction is direct and induces the increase of GPER1 protein levels residing at the plasma membrane surface in a estradiol-independent manner. Interacts (via N-terminus tandem pair of PDZ domains) with NOS1 (via N-terminal domain). Interacts with SHANK3. Interacts with GPR85. Interacts with CACNG2 and MPP2 (via the SH3-Guanylate kinase-like sub-module). Interacts with ADGRB1. Found in a complex with PRR7 and GRIN1. Interacts (via PDZ3 domain and to lesser degree via PDZ2 domain) with PRR7. Component of the postsynaptic hippocampal AMPA-type glutamate receptor (AMPAR) complex, at least composed of pore forming AMPAR subunits GRIA1, GRIA2 and GRIA3 and AMPAR auxiliary proteins SHISA6 and SHISA7. Interacts (via its first two PDZ domains) with SHISA6 and SHISA7 (via PDZ-binding motif); the interaction is direct. Interacts (via PDZ domain 2) with SEMA4F (via PDZ-binding motif); this interaction may promote translocation of DLG4/SAP90 to the membrane. Interacts with RPH3A and GRIN2A; this ternary complex regulates NMDA receptor composition at postsynaptic membranes. Interacts with ABR and BCR. Interacts with DGKI (via PDZ-binding motif); controls the localization of DGKI to the synapse. Interacts with C9orf72, SMCR8 and RAB39B. Interacts with ZDHHC5. Interacts with PTEN (via PDZ domain-binding motif); the interaction is induced by NMDA and is required for PTEN location at postsynaptic density. Found in a complex with GRIA1, GRIA2, GRIA3, GRIA4, CACNG8 and CNIH2. Interacts with FAM81A; the interaction facilitates condensate formation via liquid-liquid phase separation. Interacts with ADGRL3. Interacts with SORCS3. In terms of processing, palmitoylated. Palmitoylation is required for targeting to postsynaptic density, plasma membrane and synapses. Palmitoylation by ZDHHC2 occurs when the synaptic activity decreases and induces DLG4 synaptic clustering. Palmitoylation by ZDHHC15 regulates trafficking to the postsynaptic density and function in synaptogenesis. Palmitoylation may play a role in glutamate receptor GRIA1 synapse clustering. Depalmitoylated by ABHD17A and ABHD17B and to a lesser extent by ABHD17C, ABHD12, ABHD13, LYPLA1 and LYPLA2. Undergoes rapid synaptic palmitoylation/depalmitoylation cycle during neuronal development which slows down in mature neurons. Ubiquitinated by MDM2 in response to NMDA receptor activation, leading to proteasome-mediated degradation of DLG4 which is required for AMPA receptor endocytosis. Expressed in brain (at protein level). Detected in juxtaparanodal zones in the central nervous system and at nerve terminal plexuses of basket cells in the cerebellum. Expressed in cerebrum. Expressed in hippocampal neurons (at protein level). Isoform 1 and isoform 2: highly expressed in cerebellum, cortex, hippocampus, and corpus striatum.

The protein resides in the cell membrane. Its subcellular location is the postsynaptic density. It is found in the synapse. It localises to the cytoplasm. The protein localises to the cell projection. The protein resides in the axon. Its subcellular location is the dendritic spine. It is found in the dendrite. It localises to the presynapse. Its function is as follows. Postsynaptic scaffolding protein that plays a critical role in synaptogenesis and synaptic plasticity by providing a platform for the postsynaptic clustering of crucial synaptic proteins. Interacts with the cytoplasmic tail of NMDA receptor subunits and shaker-type potassium channels. Required for synaptic plasticity associated with NMDA receptor signaling. Overexpression or depletion of DLG4 changes the ratio of excitatory to inhibitory synapses in hippocampal neurons. May reduce the amplitude of ASIC3 acid-evoked currents by retaining the channel intracellularly. May regulate the intracellular trafficking of ADR1B. Also regulates AMPA-type glutamate receptor (AMPAR) immobilization at postsynaptic density keeping the channels in an activated state in the presence of glutamate and preventing synaptic depression. Under basal conditions, cooperates with FYN to stabilize palmitoyltransferase ZDHHC5 at the synaptic membrane through FYN-mediated phosphorylation of ZDHHC5 and its subsequent inhibition of association with endocytic proteins. This chain is Disks large homolog 4, found in Rattus norvegicus (Rat).